Here is a 757-residue protein sequence, read N- to C-terminus: Polyribonucleotide nucleotidyltransferase (757 aa).

Aspartate 531 and aspartate 537 together coordinate Mg(2+). The KH domain maps to 597–656 (PRVTTIRVPVDKIGEVIGPKGKIINAITEETGAQISIEDDGTVFVGATDGPSAQAAIDRI). An S1 motif domain is found at 668–737 (GERFLGTVVK…KRGKISLVLV (70 aa)).

This sequence belongs to the polyribonucleotide nucleotidyltransferase family. The cofactor is Mg(2+).

The protein localises to the cytoplasm. The enzyme catalyses RNA(n+1) + phosphate = RNA(n) + a ribonucleoside 5'-diphosphate. Involved in mRNA degradation. Catalyzes the phosphorolysis of single-stranded polyribonucleotides processively in the 3'- to 5'-direction. This Mycolicibacterium paratuberculosis (strain ATCC BAA-968 / K-10) (Mycobacterium paratuberculosis) protein is Polyribonucleotide nucleotidyltransferase.